Here is a 462-residue protein sequence, read N- to C-terminus: Phosphoglucosamine mutase (462 aa).

The Phosphoserine intermediate role is filled by Ser112. The Mg(2+) site is built by Ser112, Asp250, Asp252, and Asp254. Ser112 is modified (phosphoserine).

This sequence belongs to the phosphohexose mutase family. Mg(2+) serves as cofactor. In terms of processing, activated by phosphorylation.

The enzyme catalyses alpha-D-glucosamine 1-phosphate = D-glucosamine 6-phosphate. Functionally, catalyzes the conversion of glucosamine-6-phosphate to glucosamine-1-phosphate. This Parasynechococcus marenigrum (strain WH8102) protein is Phosphoglucosamine mutase.